A 300-amino-acid chain; its full sequence is Ribosomal protein L11 methyltransferase (300 aa).

S-adenosyl-L-methionine is bound by residues Thr152, Gly173, Asp195, and Asn234.

The protein belongs to the methyltransferase superfamily. PrmA family.

It is found in the cytoplasm. It carries out the reaction L-lysyl-[protein] + 3 S-adenosyl-L-methionine = N(6),N(6),N(6)-trimethyl-L-lysyl-[protein] + 3 S-adenosyl-L-homocysteine + 3 H(+). Its function is as follows. Methylates ribosomal protein L11. The polypeptide is Ribosomal protein L11 methyltransferase (Burkholderia orbicola (strain MC0-3)).